We begin with the raw amino-acid sequence, 98 residues long: MNKAILHAIIIYTLAGCPYCMKAKALLDKKEVAYEEIEVQNSQDPNVAVLRKKLNNPDRLTFPQIFIDNMHIGGCDDLYDLDKEGRLDKLLEGQPKKD.

The Glutaredoxin domain maps to 1-98 (MNKAILHAII…KLLEGQPKKD (98 aa)). A disulfide bridge connects residues cysteine 17 and cysteine 20.

The protein belongs to the glutaredoxin family. As to quaternary structure, monomer.

Its subcellular location is the cytoplasm. Functionally, has a glutathione-disulfide oxidoreductase activity in the presence of NADPH and glutathione reductase. Reduces low molecular weight disulfides and proteins. The polypeptide is Glutaredoxin 1 (grxC1) (Rickettsia bellii (strain RML369-C)).